The sequence spans 117 residues: Small nuclear ribonucleoprotein Sm D1 (117 aa).

The region spanning 2-74 is the Sm domain; sequence KLVRFLMKLT…IRYYILPDSL (73 aa). The tract at residues 81 to 117 is disordered; it reads IDDSTKPKQKKKEVVRGRGRGRGRGTRGRGRGASRGF. The span at 87 to 117 shows a compositional bias: basic residues; sequence PKQKKKEVVRGRGRGRGRGTRGRGRGASRGF.

Belongs to the snRNP core protein family. Belongs to the 40S cdc5-associated complex (or cwf complex), a spliceosome sub-complex reminiscent of a late-stage spliceosome composed of the U2, U5 and U6 snRNAs and at least brr2, cdc5, cwf2/prp3, cwf3/syf1, cwf4/syf3, cwf5/ecm2, spp42/cwf6, cwf7/spf27, cwf8, cwf9, cwf10, cwf11, cwf12, prp45/cwf13, cwf14, cwf15, cwf16, cwf17, cwf18, cwf19, cwf20, cwf21, cwf22, cwf23, cwf24, cwf25, cwf26, cyp7/cwf27, cwf28, cwf29/ist3, lea1, msl1, prp5/cwf1, prp10, prp12/sap130, prp17, prp22, sap61, sap62, sap114, sap145, slu7, smb1, smd1, smd3, smf1, smg1 and syf2. Interacts with saf5; the interaction is direct.

It localises to the nucleus. The protein localises to the cytoplasm. Functionally, plays a role in pre-mRNA splicing as a core component of the spliceosomal U1, U2, U4 and U5 small nuclear ribonucleoproteins (snRNPs), the building blocks of the spliceosome. This Schizosaccharomyces pombe (strain 972 / ATCC 24843) (Fission yeast) protein is Small nuclear ribonucleoprotein Sm D1 (smd1).